The primary structure comprises 407 residues: S-adenosylmethionine synthase (407 aa).

ATP is bound at residue His-21. Position 23 (Asp-23) interacts with Mg(2+). Position 49 (Glu-49) interacts with K(+). The L-methionine site is built by Glu-62 and Gln-105. Residues 105–115 (QSQEIGAGVDA) are flexible loop. ATP is bound by residues 179–181 (DGK), Asp-259, 265–266 (RK), Ala-282, and Lys-286. Asp-259 lines the L-methionine pocket. Residue Lys-290 coordinates L-methionine.

Belongs to the AdoMet synthase family. As to quaternary structure, homotetramer; dimer of dimers. Mg(2+) serves as cofactor. The cofactor is K(+).

Its subcellular location is the cytoplasm. The enzyme catalyses L-methionine + ATP + H2O = S-adenosyl-L-methionine + phosphate + diphosphate. Its pathway is amino-acid biosynthesis; S-adenosyl-L-methionine biosynthesis; S-adenosyl-L-methionine from L-methionine: step 1/1. Functionally, catalyzes the formation of S-adenosylmethionine (AdoMet) from methionine and ATP. The overall synthetic reaction is composed of two sequential steps, AdoMet formation and the subsequent tripolyphosphate hydrolysis which occurs prior to release of AdoMet from the enzyme. This chain is S-adenosylmethionine synthase, found in Corynebacterium aurimucosum (strain ATCC 700975 / DSM 44827 / CIP 107346 / CN-1) (Corynebacterium nigricans).